Here is a 202-residue protein sequence, read N- to C-terminus: Outer-membrane lipoprotein LolB (202 aa).

Residues 1-18 form the signal peptide; the sequence is MFRRTYFWLMLLPLFMVG. C19 is lipidated: N-palmitoyl cysteine. Residue C19 is the site of S-diacylglycerol cysteine attachment.

The protein belongs to the LolB family. Monomer.

The protein localises to the cell outer membrane. Its function is as follows. Plays a critical role in the incorporation of lipoproteins in the outer membrane after they are released by the LolA protein. The protein is Outer-membrane lipoprotein LolB of Vibrio vulnificus (strain YJ016).